We begin with the raw amino-acid sequence, 800 residues long: Ribosome-releasing factor 2, mitochondrial (800 aa).

The region spanning 21-307 is the tr-type G domain; sequence SKVRNIGIIA…AIANYLPSPS (287 aa). GTP contacts are provided by residues 30–37, 95–99, and 147–150; these read AHIDAGKT, DTPGH, and NKMD.

The protein belongs to the TRAFAC class translation factor GTPase superfamily. Classic translation factor GTPase family. EF-G/EF-2 subfamily.

The protein localises to the mitochondrion. Functionally, mitochondrial GTPase that mediates the disassembly of ribosomes from messenger RNA at the termination of mitochondrial protein biosynthesis. Not involved in the GTP-dependent ribosomal translocation step during translation elongation. The protein is Ribosome-releasing factor 2, mitochondrial of Kluyveromyces lactis (strain ATCC 8585 / CBS 2359 / DSM 70799 / NBRC 1267 / NRRL Y-1140 / WM37) (Yeast).